The chain runs to 367 residues: Cytochrome-c peroxidase IdrP2 (367 aa).

A signal peptide spans methionine 1 to alanine 28. Cytochrome c domains follow at residues aspartate 47 to glutamine 157 and serine 200 to serine 345. Positions 69, 72, 73, 215, 218, and 219 each coordinate heme c.

The iodate reductase (Idr) complex is composed of a molybdopterin-dependent iodate reductase (IdrA and IdrB subunits) and two associated peroxidases (IdrP1 and IdrP2). The cofactor is heme c.

Its subcellular location is the periplasm. The enzyme catalyses 2 Fe(II)-[cytochrome c] + H2O2 + 2 H(+) = 2 Fe(III)-[cytochrome c] + 2 H2O. In terms of biological role, involved in iodate respiration. May play a critical role in detoxification of inadvertent H(2)O(2) generated by the iodate reductase IdrA/IdrB. The protein is Cytochrome-c peroxidase IdrP2 of Denitromonas iodatirespirans.